We begin with the raw amino-acid sequence, 318 residues long: Chlorophyllase-2 (318 aa).

The GXSXG signature appears at 136 to 140; it reads GHSRG. Catalysis depends on S138, which acts as the Nucleophile. Catalysis depends on charge relay system residues D167 and H244.

The protein belongs to the AB hydrolase superfamily. Lipase family. As to expression, expressed in leaves, flowers and flower buds, but not in roots.

It is found in the cytoplasm. Its subcellular location is the cytosol. The enzyme catalyses a chlorophyll + H2O = a chlorophyllide + phytol + H(+). It catalyses the reaction chlorophyll a + H2O = phytol + chlorophyllide a + H(+). It functions in the pathway porphyrin-containing compound metabolism; chlorophyll degradation. Functionally, catalyzes the hydrolysis of ester bond in chlorophyll to yield chlorophyllide and phytol. Does not seem to be required for chlorophyll degradation during senescence. This is Chlorophyllase-2 from Arabidopsis thaliana (Mouse-ear cress).